Consider the following 227-residue polypeptide: Claudin-15 (227 aa).

Position 1 (methionine 1) is a topological domain, cytoplasmic. A helical membrane pass occupies residues 2–24 (SIAVETFGFFMSALGLLMLGVTL). The Extracellular portion of the chain corresponds to 25–74 (PNSYWRVSTVHGNVITTNTIFENLWYSCATDSLGVSNCWDFPSMLALSGY). Cysteine 52 and cysteine 62 form a disulfide bridge. Residues 75–99 (VQGCRALMITAILLGFLGLFLGMVG) form a helical membrane-spanning segment. The Cytoplasmic portion of the chain corresponds to 100–115 (LRCTNVGNIDLSRKAK). Serine 111 carries the post-translational modification Phosphoserine. A helical transmembrane segment spans residues 116-140 (LLAIAGAFHILAGACGMVAISWYAV). The Extracellular portion of the chain corresponds to 141 to 159 (NITTDFFNPLYVGTKYELG). The tract at residues 146-147 (FF) is important for the formation of tight-junction strand-like structures. A helical membrane pass occupies residues 160–182 (SALYLGWSASLLSILGGICVFST). Topologically, residues 183–227 (CCCDSKEDPATRVGLPYKPSTVVTARATSDESDVSFGKYGKNAYV) are cytoplasmic. A phosphoserine mark is found at serine 211, serine 214, and serine 217.

It belongs to the claudin family. As to quaternary structure, can form homo- and heteropolymeric tight junction strands. Post-translationally, palmitoylated. In terms of tissue distribution, detected in kidney, jejunum and colon (at protein level).

It is found in the cell junction. Its subcellular location is the tight junction. The protein localises to the cell membrane. It carries out the reaction Na(+)(in) = Na(+)(out). The enzyme catalyses K(+)(in) = K(+)(out). The catalysed reaction is Cs(+)(in) = Cs(+)(out). It catalyses the reaction Rb(+)(in) = Rb(+)(out). It carries out the reaction Li(+)(in) = Li(+)(out). The enzyme catalyses NH4(+)(in) = NH4(+)(out). The catalysed reaction is methylamine(out) = methylamine(in). It catalyses the reaction H2O(in) = H2O(out). Its function is as follows. Forms paracellular channels: polymerizes in tight junction strands with cation- and water-selective channels through the strands, conveying epithelial permeability in a process known as paracellular tight junction permeability. In intestinal epithelium, allows for sodium and water fluxes from the peritoneal side to the lumen of the intestine to regulate nutrient absorption and intestinal morphogenesis. This Rattus norvegicus (Rat) protein is Claudin-15.